A 153-amino-acid polypeptide reads, in one-letter code: Endoribonuclease YbeY (153 aa).

Residues His-113, His-117, and His-123 each coordinate Zn(2+).

It belongs to the endoribonuclease YbeY family. Zn(2+) serves as cofactor.

It is found in the cytoplasm. Functionally, single strand-specific metallo-endoribonuclease involved in late-stage 70S ribosome quality control and in maturation of the 3' terminus of the 16S rRNA. The sequence is that of Endoribonuclease YbeY from Aliivibrio salmonicida (strain LFI1238) (Vibrio salmonicida (strain LFI1238)).